The primary structure comprises 210 residues: MTVWVGLTGGIGSGKSAAAQCFADLGVPRIDADAAAHSLTASDGIALPEIRRLFGDTVFDTQGLLRRDILRKEVFASPSRKALLESVMLPLIFSEIKKQQETFTDAAYGIVEIPLLTEKRQFISLIRRVLTISAPVEKRIGRVMARSGLTRGEVAAVISHQASESERLLLADDVLLNDGSLKSLREKTMRLHAFYSGIFASKPTQGKHND.

In terms of domain architecture, DPCK spans 4-202 (WVGLTGGIGS…AFYSGIFASK (199 aa)). 12–17 (GSGKSA) contacts ATP.

The protein belongs to the CoaE family.

It is found in the cytoplasm. It carries out the reaction 3'-dephospho-CoA + ATP = ADP + CoA + H(+). The protein operates within cofactor biosynthesis; coenzyme A biosynthesis; CoA from (R)-pantothenate: step 5/5. Functionally, catalyzes the phosphorylation of the 3'-hydroxyl group of dephosphocoenzyme A to form coenzyme A. The polypeptide is Dephospho-CoA kinase (Neisseria meningitidis serogroup B (strain ATCC BAA-335 / MC58)).